A 48-amino-acid chain; its full sequence is Bacteriocin plantaricin-A (48 aa).

The propeptide occupies 1–25; it reads MKIQIKGMKQLSNKEMQKIVGGKSS.

In terms of assembly, active plantaricin A is composed of an alpha chain and a beta chain.

In terms of biological role, this heat stable bacteriocin inhibits the growth of closely related Lactobacillus species. It may act as a pore-forming protein, creating a channel in the cell membrane through a 'barrel stave' mechanism. This chain is Bacteriocin plantaricin-A (plnA), found in Lactiplantibacillus plantarum (strain ATCC BAA-793 / NCIMB 8826 / WCFS1) (Lactobacillus plantarum).